A 1405-amino-acid polypeptide reads, in one-letter code: DNA-directed RNA polymerase subunit beta' (1405 aa).

Cys-70, Cys-72, Cys-85, and Cys-88 together coordinate Zn(2+). Asp-460, Asp-462, and Asp-464 together coordinate Mg(2+). 4 residues coordinate Zn(2+): Cys-814, Cys-888, Cys-895, and Cys-898.

It belongs to the RNA polymerase beta' chain family. As to quaternary structure, the RNAP catalytic core consists of 2 alpha, 1 beta, 1 beta' and 1 omega subunit. When a sigma factor is associated with the core the holoenzyme is formed, which can initiate transcription. The cofactor is Mg(2+). Requires Zn(2+) as cofactor.

It catalyses the reaction RNA(n) + a ribonucleoside 5'-triphosphate = RNA(n+1) + diphosphate. In terms of biological role, DNA-dependent RNA polymerase catalyzes the transcription of DNA into RNA using the four ribonucleoside triphosphates as substrates. The protein is DNA-directed RNA polymerase subunit beta' of Shewanella baltica (strain OS223).